Here is a 324-residue protein sequence, read N- to C-terminus: MAEQYADKQIKLFSLTANREIAEKISQASGIPLGKMSSRQFSDGEIMINIEETVRGDDIYIIQSTSFPVNDNLWELLIMIDACKRASANTVNIVVPYFGYSRQDRIAASREPITAKLVANMLVKAGVDRVLTLDLHAVQVQGFFDIPVDNLFTVPLFAEHYNQLGLSGEDVVVVSPKNSGIKRARSLAEYLDSPIAIIDYAQDDSEREEGYIIGEVEGKKAIIIDDILNTGKTFAEAAKILERGGATEIYAVASHGLFAGGAADILESAPIREIIVTDSVLSKERIPSNIKYLTASHLIADAIIRIHERKPLSPLFSYRSDKKD.

Residues 43–45 and 102–103 contribute to the ATP site; these read DGE and RQ. A Mg(2+)-binding site is contributed by His136. Residues Asp225 and 229 to 233 contribute to the D-ribose 5-phosphate site; that span reads NTGKT.

Belongs to the ribose-phosphate pyrophosphokinase family. Class I subfamily. In terms of assembly, homohexamer. It depends on Mg(2+) as a cofactor.

It localises to the cytoplasm. The catalysed reaction is D-ribose 5-phosphate + ATP = 5-phospho-alpha-D-ribose 1-diphosphate + AMP + H(+). It functions in the pathway metabolic intermediate biosynthesis; 5-phospho-alpha-D-ribose 1-diphosphate biosynthesis; 5-phospho-alpha-D-ribose 1-diphosphate from D-ribose 5-phosphate (route I): step 1/1. Involved in the biosynthesis of the central metabolite phospho-alpha-D-ribosyl-1-pyrophosphate (PRPP) via the transfer of pyrophosphoryl group from ATP to 1-hydroxyl of ribose-5-phosphate (Rib-5-P). This is Putative ribose-phosphate pyrophosphokinase 2 from Streptococcus agalactiae serotype III (strain NEM316).